Here is a 200-residue protein sequence, read N- to C-terminus: Dephospho-CoA kinase (200 aa).

In terms of domain architecture, DPCK spans 3-200 (RIGLTGGIGS…LIAEILTRIK (198 aa)). 11 to 16 (GSGKST) provides a ligand contact to ATP.

This sequence belongs to the CoaE family.

The protein resides in the cytoplasm. It carries out the reaction 3'-dephospho-CoA + ATP = ADP + CoA + H(+). The protein operates within cofactor biosynthesis; coenzyme A biosynthesis; CoA from (R)-pantothenate: step 5/5. Catalyzes the phosphorylation of the 3'-hydroxyl group of dephosphocoenzyme A to form coenzyme A. The polypeptide is Dephospho-CoA kinase (Corynebacterium efficiens (strain DSM 44549 / YS-314 / AJ 12310 / JCM 11189 / NBRC 100395)).